The following is a 409-amino-acid chain: Lissencephaly-1 homolog (409 aa).

One can recognise a LisH domain in the interval 7–39 (RRERSNQAIADYLGSNGYTDALEAFRKEADMPN). The stretch at 54–81 (TSVIRLQKKVMELEAKLSEAEKEAIEGA) forms a coiled coil. WD repeat units follow at residues 104–145 (GHRA…RTLK), 146–185 (GHTD…ECVK), 189–228 (GHDH…CVKT), 231–270 (GHRE…CKAE), 273–332 (EHEN…CLFT), 335–374 (GHDN…CMKT), and 377–409 (AHSH…WECR).

This sequence belongs to the WD repeat LIS1/nudF family.

The protein localises to the cytoplasm. It localises to the cytoskeleton. The protein resides in the microtubule organizing center. It is found in the centrosome. In terms of biological role, positively regulates the activity of the minus-end directed microtubule motor protein dynein. May enhance dynein-mediated microtubule sliding by targeting dynein to the microtubule plus end. Required for several dynein- and microtubule-dependent processes. In Aedes aegypti (Yellowfever mosquito), this protein is Lissencephaly-1 homolog.